A 374-amino-acid polypeptide reads, in one-letter code: Phosphatidylglycerol--prolipoprotein diacylglyceryl transferase (374 aa).

4 helical membrane passes run 33-53 (ICFI…IALF), 155-175 (LCWF…VFFY), 195-215 (LASH…TSYI), and 222-242 (LSFL…AVFI). Position 243 (R243) interacts with a 1,2-diacyl-sn-glycero-3-phospho-(1'-sn-glycerol). A run of 3 helical transmembrane segments spans residues 279–299 (PVQL…FTLW), 306–326 (LAAG…RFLL), and 341–361 (ILQM…CLVW).

Belongs to the Lgt family.

It is found in the cell inner membrane. The enzyme catalyses L-cysteinyl-[prolipoprotein] + a 1,2-diacyl-sn-glycero-3-phospho-(1'-sn-glycerol) = an S-1,2-diacyl-sn-glyceryl-L-cysteinyl-[prolipoprotein] + sn-glycerol 1-phosphate + H(+). Its pathway is protein modification; lipoprotein biosynthesis (diacylglyceryl transfer). In terms of biological role, catalyzes the transfer of the diacylglyceryl group from phosphatidylglycerol to the sulfhydryl group of the N-terminal cysteine of a prolipoprotein, the first step in the formation of mature lipoproteins. The protein is Phosphatidylglycerol--prolipoprotein diacylglyceryl transferase of Protochlamydia amoebophila (strain UWE25).